The chain runs to 344 residues: Dihydroorotate dehydrogenase (quinone) (344 aa).

FMN is bound by residues 64-68 (AGLDK) and threonine 88. Position 68 (lysine 68) interacts with substrate. 113–117 (NRMGF) contributes to the substrate binding site. The FMN site is built by asparagine 144 and asparagine 177. Asparagine 177 provides a ligand contact to substrate. The Nucleophile role is filled by serine 180. A substrate-binding site is contributed by asparagine 182. FMN-binding residues include lysine 222 and threonine 250. A substrate-binding site is contributed by 251–252 (NT). FMN contacts are provided by residues glycine 273, glycine 302, and 323–324 (YS).

It belongs to the dihydroorotate dehydrogenase family. Type 2 subfamily. In terms of assembly, monomer. FMN serves as cofactor.

The protein localises to the cell membrane. The enzyme catalyses (S)-dihydroorotate + a quinone = orotate + a quinol. The protein operates within pyrimidine metabolism; UMP biosynthesis via de novo pathway; orotate from (S)-dihydroorotate (quinone route): step 1/1. In terms of biological role, catalyzes the conversion of dihydroorotate to orotate with quinone as electron acceptor. The protein is Dihydroorotate dehydrogenase (quinone) of Polynucleobacter asymbioticus (strain DSM 18221 / CIP 109841 / QLW-P1DMWA-1) (Polynucleobacter necessarius subsp. asymbioticus).